Reading from the N-terminus, the 479-residue chain is UDP-N-acetylmuramate--L-alanine ligase (479 aa).

ATP is bound at residue 127 to 133; the sequence is GTHGKTT.

Belongs to the MurCDEF family.

The protein localises to the cytoplasm. It catalyses the reaction UDP-N-acetyl-alpha-D-muramate + L-alanine + ATP = UDP-N-acetyl-alpha-D-muramoyl-L-alanine + ADP + phosphate + H(+). It participates in cell wall biogenesis; peptidoglycan biosynthesis. Cell wall formation. The chain is UDP-N-acetylmuramate--L-alanine ligase from Shewanella denitrificans (strain OS217 / ATCC BAA-1090 / DSM 15013).